Reading from the N-terminus, the 436-residue chain is Methylenetetrahydrofolate--tRNA-(uracil-5-)-methyltransferase TrmFO (436 aa).

Residue Gly-8–Gly-13 coordinates FAD.

It belongs to the MnmG family. TrmFO subfamily. The cofactor is FAD.

It localises to the cytoplasm. The catalysed reaction is uridine(54) in tRNA + (6R)-5,10-methylene-5,6,7,8-tetrahydrofolate + NADH + H(+) = 5-methyluridine(54) in tRNA + (6S)-5,6,7,8-tetrahydrofolate + NAD(+). It carries out the reaction uridine(54) in tRNA + (6R)-5,10-methylene-5,6,7,8-tetrahydrofolate + NADPH + H(+) = 5-methyluridine(54) in tRNA + (6S)-5,6,7,8-tetrahydrofolate + NADP(+). Catalyzes the folate-dependent formation of 5-methyl-uridine at position 54 (M-5-U54) in all tRNAs. The chain is Methylenetetrahydrofolate--tRNA-(uracil-5-)-methyltransferase TrmFO from Persephonella marina (strain DSM 14350 / EX-H1).